The following is a 403-amino-acid chain: MADPKYADLPGIARNEPDLYETSDLPEDDQAEFDAEELTSTSVEHIIVNPNAAYDKFKDKKVGTRCLDFSDRITKSKRTGYESGEYEILGEGLGIKETPQQKYQRLLHEVQELTQEVEKTQSTLKESATEEKLTPVALAKQVAALKQQLVSTHLEKLLGPDAAINLTDPDGALAKRLLTQLDAAKTRKDPEGKSSAKGPGPDNENLVTYELHCRPEQNKFSQAAKMAELEKRLGELEAAVRCDQDTQNPLTVGLQGSCLMDTVEILQAKVNLLDVASLDQVEARLQSVLGKMNEIAKHKATIEDADTESKVHQLYETVQKWDSMSITLPQVVQRLLTLKQLHEQAMQFGQLLTHLDTTQQMISNSLKDNTNALAMVQKAMKENLATVEDNFSSIDGRIKKLSK.

The segment at 1-26 is disordered; that stretch reads MADPKYADLPGIARNEPDLYETSDLP. Residues 99–132 adopt a coiled-coil conformation; it reads PQQKYQRLLHEVQELTQEVEKTQSTLKESATEEK. The segment at 183–206 is disordered; sequence AAKTRKDPEGKSSAKGPGPDNENL. Basic and acidic residues predominate over residues 184–194; that stretch reads AKTRKDPEGKS. A coiled-coil region spans residues 381–401; the sequence is KENLATVEDNFSSIDGRIKKL.

Belongs to the dynactin subunit 2 family. As to quaternary structure, subunit of dynactin, a multiprotein complex part of a tripartite complex with dynein and a adapter, such as BICDL1, BICD2 or HOOK3. The dynactin complex is built around ACTR1A/ACTB filament and consists of an actin-related filament composed of a shoulder domain, a pointed end and a barbed end. Its length is defined by its flexible shoulder domain. The soulder is composed of 2 DCTN1 subunits, 4 DCTN2 and 2 DCTN3.

It localises to the cytoplasm. It is found in the cytoskeleton. The protein resides in the microtubule organizing center. The protein localises to the centrosome. Its subcellular location is the membrane. Functionally, part of the dynactin complex that activates the molecular motor dynein for ultra-processive transport along microtubules. In the dynactin soulder domain, binds the ACTR1A filament and acts as a molecular ruler to determine the length. Modulates cytoplasmic dynein binding to an organelle, and plays a role in prometaphase chromosome alignment and spindle organization during mitosis. Involved in anchoring microtubules to centrosomes. This chain is Dynactin subunit 2-B (dctn2-b), found in Xenopus laevis (African clawed frog).